The chain runs to 236 residues: UPF0502 protein Bcep1808_3727 (236 aa).

It belongs to the UPF0502 family.

The chain is UPF0502 protein Bcep1808_3727 from Burkholderia vietnamiensis (strain G4 / LMG 22486) (Burkholderia cepacia (strain R1808)).